The chain runs to 472 residues: Cysteine--tRNA ligase (472 aa).

Cys27 lines the Zn(2+) pocket. The 'HIGH' region motif lies at 29 to 39 (PTVYNLIHIGN). Positions 214, 239, and 243 each coordinate Zn(2+). Residues 271–275 (KMSKS) carry the 'KMSKS' region motif. Lys274 is a binding site for ATP.

The protein belongs to the class-I aminoacyl-tRNA synthetase family. Monomer. It depends on Zn(2+) as a cofactor.

Its subcellular location is the cytoplasm. It carries out the reaction tRNA(Cys) + L-cysteine + ATP = L-cysteinyl-tRNA(Cys) + AMP + diphosphate. This Lachnospira eligens (strain ATCC 27750 / DSM 3376 / VPI C15-48 / C15-B4) (Eubacterium eligens) protein is Cysteine--tRNA ligase.